The sequence spans 498 residues: Putative antiporter subunit mnhD2 (498 aa).

A run of 14 helical transmembrane segments spans residues leucine 2 to phenylalanine 22, tyrosine 32 to valine 52, leucine 78 to phenylalanine 98, tyrosine 108 to serine 128, leucine 130 to leucine 150, isoleucine 161 to leucine 181, isoleucine 209 to leucine 229, leucine 240 to phenylalanine 260, isoleucine 271 to isoleucine 291, isoleucine 308 to phenylalanine 328, leucine 330 to isoleucine 350, phenylalanine 369 to phenylalanine 389, glycine 403 to phenylalanine 423, and isoleucine 451 to asparagine 471.

The protein belongs to the CPA3 antiporters (TC 2.A.63) subunit D family. As to quaternary structure, may form a heterooligomeric complex that consists of seven subunits: mnhA2, mnhB2, mnhC2, mnhD2, mnhE2, mnhF2 and mnhG2.

It localises to the cell membrane. This is Putative antiporter subunit mnhD2 (mnhD2) from Staphylococcus aureus (strain JH1).